The chain runs to 748 residues: Glucans biosynthesis glucosyltransferase H (748 aa).

7 consecutive transmembrane segments (helical) span residues 85 to 107, 127 to 149, 443 to 465, 494 to 516, 529 to 551, 587 to 606, and 608 to 630; these read LIVR…GYGM, FLVL…FVLL, GIGS…LISL, AWVF…LVLI, GRVL…CMMI, LAGP…SVSL, and LLLW…IMTS.

Belongs to the glycosyltransferase 2 family. OpgH subfamily.

The protein resides in the cell inner membrane. Its pathway is glycan metabolism; osmoregulated periplasmic glucan (OPG) biosynthesis. Functionally, involved in the biosynthesis of osmoregulated periplasmic glucans (OPGs). The sequence is that of Glucans biosynthesis glucosyltransferase H from Bradyrhizobium diazoefficiens (strain JCM 10833 / BCRC 13528 / IAM 13628 / NBRC 14792 / USDA 110).